Reading from the N-terminus, the 309-residue chain is NADH-cytochrome b5 reductase 2 (309 aa).

A helical membrane pass occupies residues 3 to 23 (ILTAPVLIGVSIVVITVLYLF). Residues 48–160 (SVKYPLPLIE…RGPNGLLVYN (113 aa)) form the FAD-binding FR-type domain. Residues 140–170 (DNMKIGDTIDFRGPNGLLVYNGKGKFAIRPD) and 179–214 (KFKHVAMIAGGTGITPMLQLIRSITADSFDETVCSL) each bind FAD.

It belongs to the flavoprotein pyridine nucleotide cytochrome reductase family. It depends on FAD as a cofactor.

Its subcellular location is the membrane. The catalysed reaction is 2 Fe(III)-[cytochrome b5] + NADH = 2 Fe(II)-[cytochrome b5] + NAD(+) + H(+). Functionally, NADH-cytochrome b5 reductases are involved in desaturation and elongation of fatty acids, cholesterol biosynthesis and drug metabolism. The chain is NADH-cytochrome b5 reductase 2 (cyb5r2) from Danio rerio (Zebrafish).